Here is a 331-residue protein sequence, read N- to C-terminus: Phosphoribosylformylglycinamidine cyclo-ligase (331 aa).

Belongs to the AIR synthase family.

It localises to the cytoplasm. It carries out the reaction 2-formamido-N(1)-(5-O-phospho-beta-D-ribosyl)acetamidine + ATP = 5-amino-1-(5-phospho-beta-D-ribosyl)imidazole + ADP + phosphate + H(+). The protein operates within purine metabolism; IMP biosynthesis via de novo pathway; 5-amino-1-(5-phospho-D-ribosyl)imidazole from N(2)-formyl-N(1)-(5-phospho-D-ribosyl)glycinamide: step 2/2. This Clostridium novyi (strain NT) protein is Phosphoribosylformylglycinamidine cyclo-ligase.